A 569-amino-acid chain; its full sequence is Cryptochrome DASH, chloroplastic/mitochondrial (569 aa).

The Photolyase/cryptochrome alpha/beta domain maps to 84–221; the sequence is GVTILWFRND…KLELIWGSTM (138 aa). Residues Tyr316 and 329–333 each bind FAD; that span reads STKFS. Arg436 contributes to the ATP binding site. Positions 466 and 468 each coordinate FAD. Asp485 lines the ATP pocket. The disordered stretch occupies residues 541–569; sequence GNGPMAGGSKSGGGFRGSHSGRRSRHNGP. Over residues 544 to 556 the composition is skewed to gly residues; the sequence is PMAGGSKSGGGFR. Over residues 559 to 569 the composition is skewed to basic residues; that stretch reads HSGRRSRHNGP.

Belongs to the DNA photolyase class-1 family. As to quaternary structure, homodimer. FAD serves as cofactor. It depends on (6R)-5,10-methylene-5,6,7,8-tetrahydrofolate as a cofactor.

The protein resides in the plastid. It is found in the chloroplast. The protein localises to the mitochondrion. In terms of biological role, may have a photoreceptor function. Binds ss- and ds-DNA in a sequence non-specific manner. Has a photolyase activity specific for cyclobutane pyrimidine dimers in ssDNA. The polypeptide is Cryptochrome DASH, chloroplastic/mitochondrial (CRYD) (Arabidopsis thaliana (Mouse-ear cress)).